The sequence spans 163 residues: Putative pre-16S rRNA nuclease (163 aa).

Belongs to the YqgF nuclease family.

It localises to the cytoplasm. Its function is as follows. Could be a nuclease involved in processing of the 5'-end of pre-16S rRNA. The chain is Putative pre-16S rRNA nuclease from Nitrobacter hamburgensis (strain DSM 10229 / NCIMB 13809 / X14).